The chain runs to 607 residues: Methylmalonate-semialdehyde dehydrogenase [acylating], mitochondrial (607 aa).

The segment at 1-69 (MVRVKQKNLE…KLRSSSSTTT (69 aa)) is disordered. Residues 1-98 (MVRVKQKNLE…QFLALRSSWL (98 aa)) constitute a mitochondrion transit peptide. The span at 9–30 (LESYRSNGTYPPTWRNPTTSFA) shows a compositional bias: polar residues. The span at 42–51 (LKSKTKRRRL) shows a compositional bias: basic residues. Phenylalanine 259, lysine 283, glutamate 286, lysine 287, and serine 336 together coordinate NAD(+). Residue cysteine 391 is the Nucleophile of the active site. An NAD(+)-binding site is contributed by glutamate 491.

It belongs to the aldehyde dehydrogenase family.

The protein localises to the mitochondrion. The catalysed reaction is 2-methyl-3-oxopropanoate + NAD(+) + CoA + H2O = propanoyl-CoA + hydrogencarbonate + NADH + H(+). This Arabidopsis thaliana (Mouse-ear cress) protein is Methylmalonate-semialdehyde dehydrogenase [acylating], mitochondrial (ALDH6B2).